The chain runs to 190 residues: Elongation factor P 2 (190 aa).

The protein belongs to the elongation factor P family.

Its subcellular location is the cytoplasm. It participates in protein biosynthesis; polypeptide chain elongation. In terms of biological role, involved in peptide bond synthesis. Stimulates efficient translation and peptide-bond synthesis on native or reconstituted 70S ribosomes in vitro. Probably functions indirectly by altering the affinity of the ribosome for aminoacyl-tRNA, thus increasing their reactivity as acceptors for peptidyl transferase. This Chlamydia trachomatis serovar D (strain ATCC VR-885 / DSM 19411 / UW-3/Cx) protein is Elongation factor P 2 (efp2).